Here is a 153-residue protein sequence, read N- to C-terminus: Probable Brix domain-containing ribosomal biogenesis protein (153 aa).

The Brix domain maps to 1-153 (MQVLTTSRKP…RILKISRSSR (153 aa)).

In terms of biological role, probably involved in the biogenesis of the ribosome. The sequence is that of Probable Brix domain-containing ribosomal biogenesis protein from Archaeoglobus fulgidus (strain ATCC 49558 / DSM 4304 / JCM 9628 / NBRC 100126 / VC-16).